The sequence spans 131 residues: Hydrogenase maturation factor HypA (131 aa).

Residue histidine 2 coordinates Ni(2+). Residues cysteine 74, cysteine 77, cysteine 91, and cysteine 94 each coordinate Zn(2+).

The protein belongs to the HypA/HybF family.

Its function is as follows. Involved in the maturation of [NiFe] hydrogenases. Required for nickel insertion into the metal center of the hydrogenase. The protein is Hydrogenase maturation factor HypA of Streptomyces avermitilis (strain ATCC 31267 / DSM 46492 / JCM 5070 / NBRC 14893 / NCIMB 12804 / NRRL 8165 / MA-4680).